Consider the following 180-residue polypeptide: Pro-glucagon (180 aa).

The signal sequence occupies residues 1-20 (MKSIYFVAGLFVMLVQGSWQ). The interval 26 to 59 (TEEKSRSFSASQADPLSDPDQMNEDKRHSQGTFT) is disordered. Ser54 carries the post-translational modification Phosphoserine. Positions 84–89 (NRNNIA) are excised as a propeptide. A phosphoserine mark is found at Ser105 and Ser108. At Arg127 the chain carries Arginine amide. Positions 131–145 (DFPEEVAIVEELGRR) are excised as a propeptide. Residues Ser150 and Ser152 each carry the phosphoserine modification.

The protein belongs to the glucagon family. Proglucagon is post-translationally processed in a tissue-specific manner in pancreatic A cells and intestinal L cells. In pancreatic A cells, the major bioactive hormone is glucagon cleaved by PCSK2/PC2. In the intestinal L cells PCSK1/PC1 liberates GLP-1, GLP-2, glicentin and oxyntomodulin. GLP-1 is further N-terminally truncated by post-translational processing in the intestinal L cells resulting in GLP-1(7-37) GLP-1-(7-36)amide. The C-terminal amidation is neither important for the metabolism of GLP-1 nor for its effects on the endocrine pancreas. Secreted in the A cells of the islets of Langerhans. In terms of tissue distribution, secreted in the A cells of the islets of Langerhans. Secreted from enteroendocrine L cells throughout the gastrointestinal tract. Also secreted in selected neurons in the brain. As to expression, secreted from enteroendocrine cells throughout the gastrointestinal tract. Also secreted in selected neurons in the brain. Secreted from enteroendocrine cells throughout the gastrointestinal tract.

Its subcellular location is the secreted. Functionally, plays a key role in glucose metabolism and homeostasis. Regulates blood glucose by increasing gluconeogenesis and decreasing glycolysis. A counterregulatory hormone of insulin, raises plasma glucose levels in response to insulin-induced hypoglycemia. Plays an important role in initiating and maintaining hyperglycemic conditions in diabetes. Its function is as follows. Potent stimulator of glucose-dependent insulin release. Also stimulates insulin release in response to IL6. Plays important roles on gastric motility and the suppression of plasma glucagon levels. May be involved in the suppression of satiety and stimulation of glucose disposal in peripheral tissues, independent of the actions of insulin. Has growth-promoting activities on intestinal epithelium. May also regulate the hypothalamic pituitary axis (HPA) via effects on LH, TSH, CRH, oxytocin, and vasopressin secretion. Increases islet mass through stimulation of islet neogenesis and pancreatic beta cell proliferation. Inhibits beta cell apoptosis. In terms of biological role, stimulates intestinal growth and up-regulates villus height in the small intestine, concomitant with increased crypt cell proliferation and decreased enterocyte apoptosis. The gastrointestinal tract, from the stomach to the colon is the principal target for GLP-2 action. Plays a key role in nutrient homeostasis, enhancing nutrient assimilation through enhanced gastrointestinal function, as well as increasing nutrient disposal. Stimulates intestinal glucose transport and decreases mucosal permeability. Significantly reduces food intake. Inhibits gastric emptying in humans. Suppression of gastric emptying may lead to increased gastric distension, which may contribute to satiety by causing a sensation of fullness. Functionally, may modulate gastric acid secretion and the gastro-pyloro-duodenal activity. May play an important role in intestinal mucosal growth in the early period of life. This chain is Pro-glucagon, found in Homo sapiens (Human).